Consider the following 495-residue polypeptide: Lysine--tRNA ligase (495 aa).

Mg(2+) is bound by residues Glu-406 and Glu-413.

Belongs to the class-II aminoacyl-tRNA synthetase family. Homodimer. The cofactor is Mg(2+).

It is found in the cytoplasm. It carries out the reaction tRNA(Lys) + L-lysine + ATP = L-lysyl-tRNA(Lys) + AMP + diphosphate. The polypeptide is Lysine--tRNA ligase (Staphylococcus aureus (strain COL)).